Reading from the N-terminus, the 177-residue chain is NADH-quinone oxidoreductase subunit B (177 aa).

The [4Fe-4S] cluster site is built by Cys56, Cys57, Cys121, and Cys151.

The protein belongs to the complex I 20 kDa subunit family. NDH-1 is composed of 14 different subunits. Subunits NuoB, C, D, E, F, and G constitute the peripheral sector of the complex. Requires [4Fe-4S] cluster as cofactor.

It localises to the cell inner membrane. The catalysed reaction is a quinone + NADH + 5 H(+)(in) = a quinol + NAD(+) + 4 H(+)(out). Functionally, NDH-1 shuttles electrons from NADH, via FMN and iron-sulfur (Fe-S) centers, to quinones in the respiratory chain. The immediate electron acceptor for the enzyme in this species is believed to be ubiquinone. Couples the redox reaction to proton translocation (for every two electrons transferred, four hydrogen ions are translocated across the cytoplasmic membrane), and thus conserves the redox energy in a proton gradient. The sequence is that of NADH-quinone oxidoreductase subunit B from Rhodobacter capsulatus (Rhodopseudomonas capsulata).